We begin with the raw amino-acid sequence, 348 residues long: tRNA N6-adenosine threonylcarbamoyltransferase (348 aa).

Fe cation is bound by residues histidine 111 and histidine 115. Substrate contacts are provided by residues 134–138, aspartate 167, glycine 180, aspartate 184, and asparagine 279; that span reads LVSGG. A Fe cation-binding site is contributed by aspartate 307.

It belongs to the KAE1 / TsaD family. Requires Fe(2+) as cofactor.

Its subcellular location is the cytoplasm. It carries out the reaction L-threonylcarbamoyladenylate + adenosine(37) in tRNA = N(6)-L-threonylcarbamoyladenosine(37) in tRNA + AMP + H(+). Functionally, required for the formation of a threonylcarbamoyl group on adenosine at position 37 (t(6)A37) in tRNAs that read codons beginning with adenine. Is involved in the transfer of the threonylcarbamoyl moiety of threonylcarbamoyl-AMP (TC-AMP) to the N6 group of A37, together with TsaE and TsaB. TsaD likely plays a direct catalytic role in this reaction. The protein is tRNA N6-adenosine threonylcarbamoyltransferase of Synechocystis sp. (strain ATCC 27184 / PCC 6803 / Kazusa).